The chain runs to 1063 residues: Cation efflux system protein CzcA (1063 aa).

10 helical membrane-spanning segments follow: residues 14-29 (WLVLLAVFGMAGLGIF), 350-370 (GAVLVIVILFLFLGNIRAALI), 452-472 (LIFGQLIIMIVYLPIFALTGV), 487-507 (ALLGAMILSVTFVPAAVALFI), 534-554 (LANTAVVLTFAAVSIVLCVAI), 883-903 (VVVPVALLLVFVLLFAMFNNI), 906-926 (GLLVFTGIPFALTGGILALWI), 937-957 (VGFIALCGVAVLNGLVMLSFI), 982-1004 (VLMTALVASLGFVPMAIATGTGA), and 1013-1033 (VVIGGILSSTALTLLVLPVLY). The disordered stretch occupies residues 1040–1063 (DEDAEDTREPVTQTHQPDQGRQPA). Residues 1049–1063 (PVTQTHQPDQGRQPA) show a composition bias toward polar residues.

This sequence belongs to the resistance-nodulation-cell division (RND) (TC 2.A.6) family.

The protein localises to the cell membrane. Has a low cation transport activity for cobalt, it is essential for the expression of cobalt, zinc, and cadmium resistance. CzcA and CzcB together would act in zinc efflux nearly as effectively as the complete CZC efflux system (CzcABC). The polypeptide is Cation efflux system protein CzcA (czcA) (Alcaligenes sp. (strain CT14)).